The chain runs to 601 residues: Sulfite reductase [NADPH] flavoprotein alpha-component (601 aa).

A Flavodoxin-like domain is found at 64 to 202 (ITLISASQTG…AAQEWRARVV (139 aa)). Residues 70–75 (SQTGNA), 117–120 (STQG), and 153–162 (LGDTSYEFFC) each bind FMN. In terms of domain architecture, FAD-binding FR-type spans 236–450 (EAPLSASLAV…IEHNDNFRLP (215 aa)). Residues Thr324, Ala358, 388–391 (RLYS), 406–408 (TVG), Tyr412, and 421–424 (GGAS) each bind FAD. NADP(+)-binding positions include 521-522 (SR), 527-531 (KIYVQ), and Asp563. Tyr601 provides a ligand contact to FAD.

The protein belongs to the NADPH-dependent sulphite reductase flavoprotein subunit CysJ family. This sequence in the N-terminal section; belongs to the flavodoxin family. It in the C-terminal section; belongs to the flavoprotein pyridine nucleotide cytochrome reductase family. In terms of assembly, alpha(8)-beta(8). The alpha component is a flavoprotein, the beta component is a hemoprotein. It depends on FAD as a cofactor. FMN serves as cofactor.

It catalyses the reaction hydrogen sulfide + 3 NADP(+) + 3 H2O = sulfite + 3 NADPH + 4 H(+). It participates in sulfur metabolism; hydrogen sulfide biosynthesis; hydrogen sulfide from sulfite (NADPH route): step 1/1. In terms of biological role, component of the sulfite reductase complex that catalyzes the 6-electron reduction of sulfite to sulfide. This is one of several activities required for the biosynthesis of L-cysteine from sulfate. The flavoprotein component catalyzes the electron flow from NADPH -&gt; FAD -&gt; FMN to the hemoprotein component. This chain is Sulfite reductase [NADPH] flavoprotein alpha-component, found in Citrobacter koseri (strain ATCC BAA-895 / CDC 4225-83 / SGSC4696).